Here is a 290-residue protein sequence, read N- to C-terminus: Nucleotide-binding protein Xfasm12_0753 (290 aa).

13 to 20 contributes to the ATP binding site; it reads GLSGSGKS. A GTP-binding site is contributed by 65–68; sequence DIRS.

This sequence belongs to the RapZ-like family.

In terms of biological role, displays ATPase and GTPase activities. This is Nucleotide-binding protein Xfasm12_0753 from Xylella fastidiosa (strain M12).